Here is a 212-residue protein sequence, read N- to C-terminus: Peptide methionine sulfoxide reductase MsrA (212 aa).

Residue Cys-52 is part of the active site.

This sequence belongs to the MsrA Met sulfoxide reductase family.

The enzyme catalyses L-methionyl-[protein] + [thioredoxin]-disulfide + H2O = L-methionyl-(S)-S-oxide-[protein] + [thioredoxin]-dithiol. It carries out the reaction [thioredoxin]-disulfide + L-methionine + H2O = L-methionine (S)-S-oxide + [thioredoxin]-dithiol. Functionally, has an important function as a repair enzyme for proteins that have been inactivated by oxidation. Catalyzes the reversible oxidation-reduction of methionine sulfoxide in proteins to methionine. The chain is Peptide methionine sulfoxide reductase MsrA from Escherichia coli (strain ATCC 8739 / DSM 1576 / NBRC 3972 / NCIMB 8545 / WDCM 00012 / Crooks).